We begin with the raw amino-acid sequence, 7126 residues long: Replicase polyprotein 1ab (7126 aa).

Residues 25 to 151 (RSDHVACTVP…EHTFLLRKNG (127 aa)) enclose the CoV Nsp1 globular domain. A BetaCoV Nsp1 C-terminal domain is found at 167–195 (TPYVEILDDLEADPTGKYSQNLLKKLIGG). Residues 197 to 472 (CIPVDQYMCG…WDKVVETANL (276 aa)) form the CoV Nsp2 N-terminal domain. The Zn(2+) site is built by Cys339, Cys342, Cys358, and Cys360. The C4 stretch occupies residues 339–360 (CNACGRGTWCTGNAIQGFACDC). The CoV Nsp2 middle domain occupies 478–712 (QHSLNFCQQF…LDIMSKAMKL (235 aa)). The region spanning 714–847 (HTNVSWAGTK…VSTLFRLKGG (134 aa)) is the CoV Nsp2 C-terminal domain. Positions 851 to 960 (KKVTFGDVNT…MTFSINPVED (110 aa)) constitute a Ubiquitin-like 1 domain. A disordered region spans residues 1039–1061 (AQEPSVESTDSTPSTSTVVSEND). The segment covering 1041-1059 (EPSVESTDSTPSTSTVVSE) has biased composition (low complexity). Macro domains lie at 1159-1328 (DLSK…KPDG) and 1329-1453 (LVYS…AIQT). Residues 1453–1526 (TPETAFINNV…LEACRAYLTS (74 aa)) form the DPUP domain. The Ubiquitin-like 2 domain maps to 1531–1586 (QVNIEVLVTIDGVNFRTVILNDATTFRKQLGATFYKGVDISDALPTVKMGGESLFV). The region spanning 1600–1871 (EYYGTSDVTF…KVEVNPDLSN (272 aa)) is the Peptidase C16 domain. Cys1641 acts as the For PL-PRO activity in catalysis. Residues Cys1721, Cys1724, Cys1756, and Cys1758 each contribute to the Zn(2+) site. The C4-type zinc finger occupies 1721 to 1758 (CTVCGIRDIEYTGMRACVYAGVNSMEELQSVFNETCVC). Active-site for PL-PRO activity residues include His1807 and Asp1822. A Nucleic acid-binding domain is found at 1885 to 2002 (TIKYSPATIL…QLYDVAPIVL (118 aa)). The region spanning 2019-2140 (PNVPVVEDVS…AKITVTATTA (122 aa)) is the G2M domain. Helical transmembrane passes span 2119–2139 (VLLG…TATT), 2152–2172 (FVVN…LFFL), and 2229–2249 (LFLL…LVIF). The tract at residues 2119 to 2402 (VLLGASSLFA…VTHIPLHGLV (284 aa)) is HD1. One can recognise a 3Ecto domain in the interval 2266-2332 (LAMYKEVRSY…LQMLQTHITS (67 aa)). Cystine bridges form between Cys2282/Cys2310 and Cys2300/Cys2307. 3 helical membrane-spanning segments follow: residues 2333–2353 (YVLN…YVLY), 2357–2377 (FNVL…SAFV), and 2382–2402 (YNYI…HGLV). Residues 2416–2506 (KFYSHVINGC…TLRRLIKPTD (91 aa)) are Y1. Positions 2416 to 2789 (KFYSHVINGC…LSVKFSATKI (374 aa)) constitute a CoV Nsp3 Y domain. Zn(2+)-binding residues include His2420, Cys2425, Cys2430, Cys2433, Cys2466, His2469, Cys2473, and Cys2476. A ZF1 region spans residues 2420–2433 (HVINGCKDTACLLC). Residues 2466–2476 (CCKHNWNCVEC) are ZF2. The interval 2507–2605 (QSHYYVDSVV…LVDVNLVTTV (99 aa)) is Y2. The interval 2507-2789 (QSHYYVDSVV…LSVKFSATKI (283 aa)) is coV-Y. Positions 2606-2688 (GDSREIAIKM…DALQYAHKND (83 aa)) are Y3. The interval 2689-2789 (IQLTTECYNN…LSVKFSATKI (101 aa)) is Y4. 4 helical membrane-spanning segments follow: residues 2807–2827 (GYCI…FCLP), 3079–3099 (STSL…FYYI), 3112–3132 (CAVV…FIVA), and 3156–3176 (AFIM…IWML). The HD2 stretch occupies residues 2807–3176 (GYCILTLFVF…FGTVVPIWML (370 aa)). The Nsp4C domain maps to 3202 to 3298 (VFTDGKLNCS…NCSVTSSVLQ (97 aa)). In terms of domain architecture, Peptidase C30 spans 3299–3604 (SGLVKMSAPS…NMQVMGVVMQ (306 aa)). Catalysis depends on for 3CL-PRO activity residues His3339 and Cys3446. Transmembrane regions (helical) follow at residues 3610–3630 (ISYG…VSVM), 3644–3664 (TIPT…MFTV), 3669–3689 (TFLS…NIVY), 3714–3734 (RTTH…AIIV), 3742–3762 (MSNL…YVIG), 3791–3811 (LAKF…FILP), and 3815–3835 (LVLL…GVFS). Residues 3610–3835 (ISYGFMHWLM…MCTMYFGVFS (226 aa)) form an HD3 region. The region spanning 3897-3979 (SKLTDLKCTS…DLFENSSVLQ (83 aa)) is the RdRp Nsp7 cofactor domain. The RdRp Nsp8 cofactor domain occupies 3980-4178 (ATLTEFSHLA…RASSSAVKLQ (199 aa)). Residues 4179–4288 (NNEIHPKGLK…GHIAATVRLQ (110 aa)) enclose the Nsp9 ssRNA-binding domain. The region spanning 4289 to 4427 (AGANTEFASN…DALRNNTVPQ (139 aa)) is the ExoN/MTase coactivator domain. Cys4362, Cys4365, His4371, Cys4378, Cys4404, Cys4407, Cys4415, and Cys4417 together coordinate Zn(2+). Zinc fingers lie at residues 4362–4378 (CLYC…SGVC) and 4404–4417 (CNVC…GCNC). The NiRAN domain maps to 4433-4690 (FLNRVRGSSV…AAETHKDCDF (258 aa)). Mn(2+)-binding residues include Asn4638 and Asp4647. Positions 4695-4793 (IEWLLLEYDY…MNMDVNIHRH (99 aa)) constitute a Nsp12 Interface domain. Positions 4724, 4730, 4735, 4739, and 4916 each coordinate Zn(2+). The region spanning 4794–5361 (RLALKELMMY…DLYSSPTTLQ (568 aa)) is the Nsp12 RNA-dependent RNA polymerase domain. A rdRp Fingers N-ter region spans residues 4796-5010 (ALKELMMYAA…HQKMLKSMAA (215 aa)). The interval 5011–5049 (TRGATCVIGTTKFYGGWDFMLKTLYKDVESPHLMGWDYP) is rdRp Palm N-ter. The RdRp catalytic domain occupies 5041-5203 (PHLMGWDYPK…CYNSDYAAKG (163 aa)). The segment at 5050-5108 (KCDRAMPNMCRILASLILARKHSTCCTNSDRFYRLANECAQVLSEYVLCGGGYYVKPGG) is rdRp Fingers C-ter. Zn(2+)-binding residues include His5071, Cys5074, and Cys5075. The segment at 5109–5244 (TSSGDATTAY…EKGPHEFCSQ (136 aa)) is rdRp Palm C-ter. Residues Ser5188, Asp5189, and Asp5190 contribute to the active site. The interval 5245-5361 (HTLYIKDGDD…DLYSSPTTLQ (117 aa)) is rdRp Thumb. The region spanning 5362-5474 (AVGSCVVCHS…MEFNRLATCD (113 aa)) is the CV ZBD domain. Zn(2+)-binding residues include Cys5366, Cys5369, Cys5377, Cys5380, Cys5387, Cys5390, His5394, His5400, Cys5411, Cys5416, Cys5433, and His5436. The (+)RNA virus helicase ATP-binding domain occupies 5618–5799 (TVPEEFANHV…MCNLGPDIFL (182 aa)). ATP is bound at residue 5643 to 5650 (GPPGTGKS). The (+)RNA virus helicase C-terminal domain maps to 5800–5974 (SVCYRCPKEI…GLFKDCSRED (175 aa)). The ExoN domain maps to 6031-6246 (LFITRDEAIR…RCLAIYDCFI (216 aa)). Catalysis depends on residues Asp6049, Glu6051, and Glu6150. Residues Cys6166, Cys6169, Cys6185, His6188, His6216, Cys6220, and His6223 each coordinate Zn(2+). Active-site residues include His6227 and Asp6232. Cys6238 lines the Zn(2+) pocket. Residues 6255–6482 (YPYISHEQKL…NLWSTFVKVQ (228 aa)) enclose the N7-MTase domain. 6290–6296 (DIGNPKG) is an S-adenosyl-L-methionine binding site. A gpppA-binding region spans residues 6368–6382 (CNGGSLYVNKHAFHT). The Zn(2+) site is built by Cys6406, Cys6428, Cys6439, and His6442. One can recognise a Nsp15 N-terminal oligomerization domain in the interval 6483 to 6543 (GLENIAFNVI…NVAFELYAKR (61 aa)). The region spanning 6544-6665 (AVRSHPDLNL…LYKKVNNEFV (122 aa)) is the AV-Nsp11N/CoV-Nsp15M domain. The NendoU domain maps to 6682-6821 (TALTPMEEDF…KDGKVQTFYP (140 aa)). Catalysis depends on residues His6712, His6727, Lys6767, Lys6870, Asp6954, Lys6994, and Glu7027. The Nidovirus-type SAM-dependent 2'-O-MTase domain occupies 6826-7120 (TNDWKPGLTM…TLNVSTDVLV (295 aa)).

It belongs to the coronaviruses polyprotein 1ab family. As to quaternary structure, interacts with host PHB and PHB2. In terms of assembly, interacts with papain-like protease nsp3 and non-structural protein 6. Monomer. Homodimer. Only the homodimer shows catalytic activity. As to quaternary structure, interacts with nsp8 and nsp12 to form the replication-transcription complex (RTC): nsp12, nsp7, two subunits of nsp8, and up to two subunits of nsp13. In terms of assembly, interacts with nsp7, nsp13 and nsp12 to form the replication-transcription complex (RTC): nsp12, nsp7, two subunits of nsp8, and up to two subunits of nsp13. Interacts with nsp12. As to quaternary structure, interacts with proofreading exoribonuclease nsp14 and 2'-O-methyltransferase nsp16; these interactions enhance nsp14 and nsp16 enzymatic activities. In terms of assembly, interacts with nsp7 and nsp8 to form the replication-transcription complex (RTC): nsp12, nsp7, two subunits of nsp8, and up to two subunits of nsp13. Interacts with nsp9. Interacts with nsp8 to form the replication-transcription complex (RTC): nsp12, nsp7, two subunits of nsp8, and up to two subunits of nsp13. Mn(2+) is required as a cofactor. Mg(2+) serves as cofactor. In terms of processing, specific enzymatic cleavages in vivo by its own proteases yield mature proteins. 3CL-PRO and PL-PRO proteinases are autocatalytically processed.

It is found in the host membrane. It localises to the host cytoplasm. Its subcellular location is the host perinuclear region. The protein resides in the host endoplasmic reticulum-Golgi intermediate compartment. The enzyme catalyses ATP + H2O = ADP + phosphate + H(+). It carries out the reaction RNA(n) + a ribonucleoside 5'-triphosphate = RNA(n+1) + diphosphate. It catalyses the reaction Thiol-dependent hydrolysis of ester, thioester, amide, peptide and isopeptide bonds formed by the C-terminal Gly of ubiquitin (a 76-residue protein attached to proteins as an intracellular targeting signal).. The catalysed reaction is a 5'-end (N(7)-methyl 5'-triphosphoguanosine)-ribonucleoside in mRNA + S-adenosyl-L-methionine = a 5'-end (N(7)-methyl 5'-triphosphoguanosine)-(2'-O-methyl-ribonucleoside) in mRNA + S-adenosyl-L-homocysteine + H(+). The enzyme catalyses uridylyl-uridylyl-ribonucleotide-RNA = a 3'-end uridylyl-2',3'-cyclophospho-uridine-RNA + a 5'-end dephospho-ribonucleoside-RNA. It carries out the reaction a 5'-end diphospho-ribonucleoside in mRNA + GTP + H(+) = a 5'-end (5'-triphosphoguanosine)-ribonucleoside in mRNA + diphosphate. It catalyses the reaction a 5'-end (5'-triphosphoguanosine)-ribonucleoside in mRNA + S-adenosyl-L-methionine = a 5'-end (N(7)-methyl 5'-triphosphoguanosine)-ribonucleoside in mRNA + S-adenosyl-L-homocysteine. In terms of biological role, the replicase polyprotein of coronaviruses is a multifunctional protein: it contains the activities necessary for the transcription of negative stranded RNA, leader RNA, subgenomic mRNAs and progeny virion RNA as well as proteinases responsible for the cleavage of the polyprotein into functional products. Its function is as follows. Inhibits host translation by interacting with the 40S ribosomal subunit. The nsp1-40S ribosome complex further induces an endonucleolytic cleavage near the 5'UTR of host mRNAs, targeting them for degradation. Viral mRNAs are not susceptible to nsp1-mediated endonucleolytic RNA cleavage thanks to the presence of a 5'-end leader sequence and are therefore protected from degradation. By suppressing host gene expression, nsp1 facilitates efficient viral gene expression in infected cells and evasion from host immune response. May play a role in the modulation of host cell survival signaling pathway by interacting with host PHB and PHB2. Indeed, these two proteins play a role in maintaining the functional integrity of the mitochondria and protecting cells from various stresses. Functionally, responsible for the cleavages located at the N-terminus of the replicase polyprotein. In addition, PL-PRO possesses a deubiquitinating/deISGylating activity and processes both 'Lys-48'- and 'Lys-63'-linked polyubiquitin chains from cellular substrates. Participates together with nsp4 in the assembly of virally-induced cytoplasmic double-membrane vesicles necessary for viral replication. Antagonizes innate immune induction of type I interferon by blocking the phosphorylation, dimerization and subsequent nuclear translocation of host IRF3. Also prevents host NF-kappa-B signaling. In terms of biological role, participates in the assembly of virally-induced cytoplasmic double-membrane vesicles necessary for viral replication. Its function is as follows. Cleaves the C-terminus of replicase polyprotein at 11 sites. Recognizes substrates containing the core sequence [ILMVF]-Q-|-[SGACN]. Also able to bind an ADP-ribose-1''-phosphate (ADRP). Plays a role in the initial induction of autophagosomes from host endoplasmic reticulum. Later, limits the expansion of these phagosomes that are no longer able to deliver viral components to lysosomes. Functionally, forms a hexadecamer with nsp8 (8 subunits of each) that may participate in viral replication by acting as a primase. Alternatively, may synthesize substantially longer products than oligonucleotide primers. In terms of biological role, forms a hexadecamer with nsp7 (8 subunits of each) that may participate in viral replication by acting as a primase. Alternatively, may synthesize substantially longer products than oligonucleotide primers. Its function is as follows. Forms a primer, NSP9-pU, which is utilized by the polymerase for the initiation of RNA chains. Interacts with ribosome signal recognition particle RNA (SRP). Together with NSP8, suppress protein integration into the cell membrane, thereby disrupting host immune defenses. Plays a pivotal role in viral transcription by stimulating both nsp14 3'-5' exoribonuclease and nsp16 2'-O-methyltransferase activities. Therefore plays an essential role in viral mRNAs cap methylation. Functionally, RNA-directed RNA polymerase that catalyzes the transcription of viral genomic and subgenomic RNAs. Acts in complex with nsp7 and nsp8 to transcribe both the minus and positive strands of genomic RNA. The kinase-like NiRAN domain of NSP12 attaches one or more nucleotides to the amino terminus of NSP9, forming a covalent RNA-protein intermediate that serves as transcription/replication primer. Subgenomic RNAs (sgRNAs) are formed by discontinuous transcription: The polymerase has the ability to pause at transcription-regulating sequences (TRS) and jump to the leader TRS, resulting in a major deletion. This creates a series of subgenomic RNAs that are replicated, transcribed and translated. In addition, Nsp12 is a subunit of the viral RNA capping enzyme that catalyzes the RNA guanylyltransferase reaction for genomic and sub-genomic RNAs. Subsequently, the NiRAN domain transfers RNA to GDP, and forms the core cap structure GpppA-RNA. In terms of biological role, multi-functional protein with a zinc-binding domain in N-terminus displaying RNA and DNA duplex-unwinding activities with 5' to 3' polarity. Activity of helicase is dependent on magnesium. Its function is as follows. Plays a role in viral RNA synthesis through two distinct activities. The N7-guanine methyltransferase activity plays a role in the formation of the cap structure GpppA-RNA. The proofreading exoribonuclease reduces the sensitivity of the virus to RNA mutagens during replication. This activity acts on both ssRNA and dsRNA in a 3'-5' direction. Plays a role in viral transcription/replication and prevents the simultaneous activation of host cell dsRNA sensors, such as MDA5/IFIH1, OAS, and PKR. Acts by degrading the 5'-polyuridines generated during replication of the poly(A) region of viral genomic and subgenomic RNAs. Catalyzes a two-step reaction in which a 2'3'-cyclic phosphate (2'3'-cP) is first generated by 2'-O transesterification, which is then hydrolyzed to a 3'-phosphate (3'-P). If not degraded, poly(U) RNA would hybridize with poly(A) RNA tails and activate host dsRNA sensors. Functionally, methyltransferase that mediates mRNA cap 2'-O-ribose methylation to the 5'-cap structure of viral mRNAs. N7-methyl guanosine cap is a prerequisite for binding of nsp16. Therefore plays an essential role in viral mRNAs cap methylation which is essential to evade immune system. The protein is Replicase polyprotein 1ab (rep) of Bat coronavirus 133/2005 (BtCoV).